We begin with the raw amino-acid sequence, 506 residues long: Cobyric acid synthase (506 aa).

The region spanning 251-448 (DITIAIVQLP…LHGLFDSDAF (198 aa)) is the GATase cobBQ-type domain. Residue Cys-332 is the Nucleophile of the active site. Residue His-440 is part of the active site.

This sequence belongs to the CobB/CobQ family. CobQ subfamily.

Its pathway is cofactor biosynthesis; adenosylcobalamin biosynthesis. Its function is as follows. Catalyzes amidations at positions B, D, E, and G on adenosylcobyrinic A,C-diamide. NH(2) groups are provided by glutamine, and one molecule of ATP is hydrogenolyzed for each amidation. The sequence is that of Cobyric acid synthase from Salmonella heidelberg (strain SL476).